Consider the following 81-residue polypeptide: ATP synthase subunit c (81 aa).

Helical transmembrane passes span 6–26 (AAAS…GPGF) and 57–77 (LAFM…LLFA).

It belongs to the ATPase C chain family. F-type ATPases have 2 components, F(1) - the catalytic core - and F(0) - the membrane proton channel. F(1) has five subunits: alpha(3), beta(3), gamma(1), delta(1), epsilon(1). F(0) has four main subunits: a(1), b(1), b'(1) and c(10-14). The alpha and beta chains form an alternating ring which encloses part of the gamma chain. F(1) is attached to F(0) by a central stalk formed by the gamma and epsilon chains, while a peripheral stalk is formed by the delta, b and b' chains.

The protein resides in the cellular thylakoid membrane. Its function is as follows. F(1)F(0) ATP synthase produces ATP from ADP in the presence of a proton or sodium gradient. F-type ATPases consist of two structural domains, F(1) containing the extramembraneous catalytic core and F(0) containing the membrane proton channel, linked together by a central stalk and a peripheral stalk. During catalysis, ATP synthesis in the catalytic domain of F(1) is coupled via a rotary mechanism of the central stalk subunits to proton translocation. Functionally, key component of the F(0) channel; it plays a direct role in translocation across the membrane. A homomeric c-ring of between 10-14 subunits forms the central stalk rotor element with the F(1) delta and epsilon subunits. The polypeptide is ATP synthase subunit c (Rippkaea orientalis (strain PCC 8801 / RF-1) (Cyanothece sp. (strain PCC 8801))).